Consider the following 585-residue polypeptide: Cytoplasmic polyadenylation element-binding protein 1 (585 aa).

Residues 1–32 form a disordered region; the sequence is MQHQLKACGDVKTSSRAQQNHRRSTAASAKRS. RRM domains follow at residues 251–356 and 373–444; these read RKVF…PWRL and RTVF…HAET. The segment at 513 to 533 is disordered; sequence DQTRILPRPPHHPAAHHSHQR. The span at 521–532 shows a compositional bias: basic residues; sequence PPHHPAAHHSHQ.

As to quaternary structure, interacts with fbf-1.

Functionally, cytoplasmic polyadenylation element binding protein that binds to and regulates the translation of specific mRNAs. Essential for progression through meiosis. Involved in spermatogenesis. In Caenorhabditis briggsae, this protein is Cytoplasmic polyadenylation element-binding protein 1 (cpb-1).